The sequence spans 180 residues: Probable RNA 2'-phosphotransferase (180 aa).

It belongs to the KptA/TPT1 family.

Its function is as follows. Removes the 2'-phosphate from RNA via an intermediate in which the phosphate is ADP-ribosylated by NAD followed by a presumed transesterification to release the RNA and generate ADP-ribose 1''-2''-cyclic phosphate (APPR&gt;P). May function as an ADP-ribosylase. The polypeptide is Probable RNA 2'-phosphotransferase (Pectobacterium atrosepticum (strain SCRI 1043 / ATCC BAA-672) (Erwinia carotovora subsp. atroseptica)).